The chain runs to 395 residues: Tyrosine--tRNA ligase (395 aa).

The short motif at 42 to 51 (PTAPDIHLGH) is the 'HIGH' region element. The short motif at 226-230 (KMSKS) is the 'KMSKS' region element. Lys229 serves as a coordination point for ATP. The S4 RNA-binding domain occupies 334–394 (IGLATLLKEA…GKRKFARVTV (61 aa)).

Belongs to the class-I aminoacyl-tRNA synthetase family. TyrS type 2 subfamily. In terms of assembly, homodimer.

It is found in the cytoplasm. It catalyses the reaction tRNA(Tyr) + L-tyrosine + ATP = L-tyrosyl-tRNA(Tyr) + AMP + diphosphate + H(+). In terms of biological role, catalyzes the attachment of tyrosine to tRNA(Tyr) in a two-step reaction: tyrosine is first activated by ATP to form Tyr-AMP and then transferred to the acceptor end of tRNA(Tyr). The chain is Tyrosine--tRNA ligase from Haemophilus influenzae (strain 86-028NP).